Here is a 196-residue protein sequence, read N- to C-terminus: ATP-dependent Clp protease proteolytic subunit (196 aa).

The Nucleophile role is filled by serine 99. Histidine 124 is an active-site residue.

It belongs to the peptidase S14 family. Fourteen ClpP subunits assemble into 2 heptameric rings which stack back to back to give a disk-like structure with a central cavity, resembling the structure of eukaryotic proteasomes.

It localises to the cytoplasm. The enzyme catalyses Hydrolysis of proteins to small peptides in the presence of ATP and magnesium. alpha-casein is the usual test substrate. In the absence of ATP, only oligopeptides shorter than five residues are hydrolyzed (such as succinyl-Leu-Tyr-|-NHMec, and Leu-Tyr-Leu-|-Tyr-Trp, in which cleavage of the -Tyr-|-Leu- and -Tyr-|-Trp bonds also occurs).. Its function is as follows. Cleaves peptides in various proteins in a process that requires ATP hydrolysis. Has a chymotrypsin-like activity. Plays a major role in the degradation of misfolded proteins. This Helicobacter hepaticus (strain ATCC 51449 / 3B1) protein is ATP-dependent Clp protease proteolytic subunit.